Reading from the N-terminus, the 332-residue chain is Beta-1,3-N-acetylglucosaminyltransferase radical fringe (332 aa).

At Met1 to Arg6 the chain is on the cytoplasmic side. A helical; Signal-anchor for type II membrane protein membrane pass occupies residues Val7–Leu29. At Pro30–Gln332 the chain is on the lumenal side. Arg75 provides a ligand contact to substrate. Asn114 carries N-linked (GlcNAc...) asparagine glycosylation. 2 disulfide bridges follow: Cys115-Cys126 and Cys144-Cys208. Asp148 is a binding site for substrate. Asp149 is a binding site for Mn(2+). Asp238 is a catalytic residue. His262 contributes to the Mn(2+) binding site. Cys312 and Cys321 are joined by a disulfide.

Belongs to the glycosyltransferase 31 family. Mn(2+) is required as a cofactor. In terms of tissue distribution, detected in all the examined tissues (12.5 dpc). High expression found in adult brain.

The protein localises to the golgi apparatus membrane. The catalysed reaction is 3-O-(alpha-L-fucosyl)-L-threonyl-[EGF-like domain protein] + UDP-N-acetyl-alpha-D-glucosamine = 3-O-(N-acetyl-beta-D-glucosaminyl-(1-&gt;3)-alpha-L-fucosyl)-L-threonyl-[EGF-like domain protein] + UDP + H(+). It carries out the reaction 3-O-(alpha-L-fucosyl)-L-seryl-[EGF-like domain protein] + UDP-N-acetyl-alpha-D-glucosamine = 3-O-(N-acetyl-beta-D-glucosaminyl-(1-&gt;3)-alpha-L-fucosyl)-L-seryl-[EGF-like domain protein] + UDP + H(+). Glycosyltransferase that initiates the elongation of O-linked fucose residues attached to EGF-like repeats in the extracellular domain of Notch molecules. Modulates NOTCH1 activity by modifying O-fucose residues at specific EGF-like domains resulting in enhancement of NOTCH1 activation by DLL1 and JAG1. May be involved in limb formation and in neurogenesis. The sequence is that of Beta-1,3-N-acetylglucosaminyltransferase radical fringe from Mus musculus (Mouse).